The chain runs to 507 residues: Maturase K (507 aa).

This sequence belongs to the intron maturase 2 family. MatK subfamily.

It is found in the plastid. The protein localises to the chloroplast. In terms of biological role, usually encoded in the trnK tRNA gene intron. Probably assists in splicing its own and other chloroplast group II introns. This chain is Maturase K, found in Euryale ferox (Gorgon plant).